A 560-amino-acid polypeptide reads, in one-letter code: MSETINTAAQFPSFEKPTVQFNEKGWGPCELPDTFKDVPYQPFSKNDRLGKICDWTNTSNNDKKYQNKYASSFGTGIQYSYYHEEDETTFHLVDTARVQKPPHQRGRFRNMRNSRSGRGRNARGGLNTHGMTTLSGKNVKARDPRHGRGMGKKFGHRGPPPKMRESSVAVRADWASIEEMDFPRLIKLSLPNIKEGVDIVTCGTLEYYDKTYDRINVKNEKPLQKIDRIVHTVTTTDDPVIRRLSKTVGNVFATDAILATIMCSTRSNYSWDIVIEKVGDKVFMDKRDHTEFDLLTVNESSVEPPTDDDSSCNSPRNLAIEATFINHNFSQQVLKTGDQEPKYKFEESNPFISEDEDIQVASVGYRYKKWELGSDIVLVARCEHDGVLQTPSGEPQFMTIKALNEWDSKLANGVEWRQKLDTQRGAVLANELRNNACKLAKWTVQAVLAGSDQLKLGYVSRINPRDHSRHVILGTQQFKPHEFATQINLSMDNAWGILRCIIDLVMKQKDGKYLIMKDPNKPIIRLYDIPDNTFDSDDSDDGEGDDEGFQQVYNYAHNKI.

The tract at residues 98 to 166 (VQKPPHQRGR…RGPPPKMRES (69 aa)) is disordered. The segment covering 100-121 (KPPHQRGRFRNMRNSRSGRGRN) has biased composition (basic residues). At T128 the chain carries Phosphothreonine. A compositionally biased stretch (basic residues) spans 147 to 156 (GRGMGKKFGH). Residues 291-305 (EFDLLTVNESSVEPP) form an RNA gate region.

It belongs to the eIF-3 subunit D family. In terms of assembly, component of the eukaryotic translation initiation factor 3 (eIF-3) complex. The eIF-3 complex interacts with pix.

The protein localises to the cytoplasm. Its function is as follows. mRNA cap-binding component of the eukaryotic translation initiation factor 3 (eIF-3) complex, which is involved in protein synthesis of a specialized repertoire of mRNAs and, together with other initiation factors, stimulates binding of mRNA and methionyl-tRNAi to the 40S ribosome. The eIF-3 complex specifically targets and initiates translation of a subset of mRNAs involved in cell proliferation. In the eIF-3 complex, eif3d specifically recognizes and binds the 7-methylguanosine cap of a subset of mRNAs. This is Eukaryotic translation initiation factor 3 subunit D-1 from Drosophila melanogaster (Fruit fly).